We begin with the raw amino-acid sequence, 538 residues long: Bifunctional purine biosynthesis protein PurH (538 aa).

One can recognise an MGS-like domain in the interval Lys6–Val158.

Belongs to the PurH family.

The enzyme catalyses (6R)-10-formyltetrahydrofolate + 5-amino-1-(5-phospho-beta-D-ribosyl)imidazole-4-carboxamide = 5-formamido-1-(5-phospho-D-ribosyl)imidazole-4-carboxamide + (6S)-5,6,7,8-tetrahydrofolate. It catalyses the reaction IMP + H2O = 5-formamido-1-(5-phospho-D-ribosyl)imidazole-4-carboxamide. The protein operates within purine metabolism; IMP biosynthesis via de novo pathway; 5-formamido-1-(5-phospho-D-ribosyl)imidazole-4-carboxamide from 5-amino-1-(5-phospho-D-ribosyl)imidazole-4-carboxamide (10-formyl THF route): step 1/1. It participates in purine metabolism; IMP biosynthesis via de novo pathway; IMP from 5-formamido-1-(5-phospho-D-ribosyl)imidazole-4-carboxamide: step 1/1. This chain is Bifunctional purine biosynthesis protein PurH, found in Brucella anthropi (strain ATCC 49188 / DSM 6882 / CCUG 24695 / JCM 21032 / LMG 3331 / NBRC 15819 / NCTC 12168 / Alc 37) (Ochrobactrum anthropi).